Here is a 298-residue protein sequence, read N- to C-terminus: Phosphatidylserine decarboxylase proenzyme (298 aa).

Active-site charge relay system; for autoendoproteolytic cleavage activity residues include Asp-113, His-169, and Ser-256. The active-site Schiff-base intermediate with substrate; via pyruvic acid; for decarboxylase activity is Ser-256. Ser-256 is modified (pyruvic acid (Ser); by autocatalysis).

This sequence belongs to the phosphatidylserine decarboxylase family. PSD-B subfamily. Prokaryotic type II sub-subfamily. In terms of assembly, heterodimer of a large membrane-associated beta subunit and a small pyruvoyl-containing alpha subunit. Requires pyruvate as cofactor. Is synthesized initially as an inactive proenzyme. Formation of the active enzyme involves a self-maturation process in which the active site pyruvoyl group is generated from an internal serine residue via an autocatalytic post-translational modification. Two non-identical subunits are generated from the proenzyme in this reaction, and the pyruvate is formed at the N-terminus of the alpha chain, which is derived from the carboxyl end of the proenzyme. The autoendoproteolytic cleavage occurs by a canonical serine protease mechanism, in which the side chain hydroxyl group of the serine supplies its oxygen atom to form the C-terminus of the beta chain, while the remainder of the serine residue undergoes an oxidative deamination to produce ammonia and the pyruvoyl prosthetic group on the alpha chain. During this reaction, the Ser that is part of the protease active site of the proenzyme becomes the pyruvoyl prosthetic group, which constitutes an essential element of the active site of the mature decarboxylase.

Its subcellular location is the cell membrane. It catalyses the reaction a 1,2-diacyl-sn-glycero-3-phospho-L-serine + H(+) = a 1,2-diacyl-sn-glycero-3-phosphoethanolamine + CO2. It functions in the pathway phospholipid metabolism; phosphatidylethanolamine biosynthesis; phosphatidylethanolamine from CDP-diacylglycerol: step 2/2. Catalyzes the formation of phosphatidylethanolamine (PtdEtn) from phosphatidylserine (PtdSer). This Desulfitobacterium hafniense (strain DSM 10664 / DCB-2) protein is Phosphatidylserine decarboxylase proenzyme.